We begin with the raw amino-acid sequence, 1066 residues long: FHIP family protein GH13096 (1066 aa).

Positions 1–15 (MSWLRTSPLRQSLTR) are enriched in polar residues. Residues 1–33 (MSWLRTSPLRQSLTRNSGGNGSGGSGNSGNASA) are disordered. A compositionally biased stretch (gly residues) spans 18–27 (GGNGSGGSGN). Serine 512 is subject to Phosphoserine. Disordered regions lie at residues 647–688 (SFKW…NSSG), 827–885 (DNSP…RSDN), and 942–1010 (SRGV…FNSE). A compositionally biased stretch (low complexity) spans 658 to 687 (NDATTTTATSDPDVEHNNSSNHNNSSINSS). Serine 829 bears the Phosphoserine mark. Residues 836 to 856 (HQQQQLQHTTNSTHQQQQAQQ) show a composition bias toward low complexity. The span at 950 to 963 (PRGNTCETSLSTTP) shows a compositional bias: polar residues. The segment covering 967–996 (AQATSASSTNSSIGGSTQTLSATHSSSTLH) has biased composition (low complexity). Positions 1001–1010 (GPQTASFNSE) are enriched in polar residues.

Belongs to the FHIP family.

This chain is FHIP family protein GH13096, found in Drosophila grimshawi (Hawaiian fruit fly).